A 366-amino-acid polypeptide reads, in one-letter code: Carboxy-cis,cis-muconate cyclase (366 aa).

Residues His-149, Arg-197, Glu-213, and Arg-275 contribute to the active site.

It belongs to the cycloisomerase 2 family. In terms of assembly, homotetramer.

It catalyses the reaction 3-carboxy-2,5-dihydro-5-oxofuran-2-acetate = 3-carboxy-cis,cis-muconate. It participates in aromatic compound metabolism; beta-ketoadipate pathway; 3-carboxy-cis,cis-muconate from 3-carboxy-2,5-dihydro-5-oxofuran-2-acetate: step 1/1. Catalyzes a syn cycloisomerization. Also possesses mle activity. The protein is Carboxy-cis,cis-muconate cyclase of Neurospora crassa (strain ATCC 24698 / 74-OR23-1A / CBS 708.71 / DSM 1257 / FGSC 987).